Consider the following 277-residue polypeptide: MAVKGFRPTTPTRREMTMCTFEEITTSTPEKSLLVSLKKSGGRNANGKITVRHIGGGAKRKYRVIDFKRNKDNISAKVVSIEYDPNRTAFIALVVYADGEKRYMIAPVGLKVGDTVVSGPESDIKVGNCLPIRNIPVGTVIHNIELAPGKGAQLVRSAGNSAQLMAKEGDYSQVRLPSGEVRYIRVECRATIGVVSNQTNEIVNIGKAGRKRHMGVRPTVRGSVMNPNDHPHGGGEGRSPIGHPSPRTPWGKPALGYKTRKNKKYSDRFIVKRRHDK.

Positions Thr-219–Lys-277 are disordered.

This sequence belongs to the universal ribosomal protein uL2 family. In terms of assembly, part of the 50S ribosomal subunit. Forms a bridge to the 30S subunit in the 70S ribosome.

One of the primary rRNA binding proteins. Required for association of the 30S and 50S subunits to form the 70S ribosome, for tRNA binding and peptide bond formation. It has been suggested to have peptidyltransferase activity; this is somewhat controversial. Makes several contacts with the 16S rRNA in the 70S ribosome. This Clostridium botulinum (strain Okra / Type B1) protein is Large ribosomal subunit protein uL2.